Consider the following 280-residue polypeptide: Ribonuclease Z (280 aa).

His61, His63, Asp65, His66, His153, Asp176, and His240 together coordinate Zn(2+). Catalysis depends on Asp65, which acts as the Proton acceptor.

Belongs to the RNase Z family. As to quaternary structure, homodimer. Zn(2+) serves as cofactor.

The enzyme catalyses Endonucleolytic cleavage of RNA, removing extra 3' nucleotides from tRNA precursor, generating 3' termini of tRNAs. A 3'-hydroxy group is left at the tRNA terminus and a 5'-phosphoryl group is left at the trailer molecule.. Its function is as follows. Zinc phosphodiesterase, which displays some tRNA 3'-processing endonuclease activity. Probably involved in tRNA maturation, by removing a 3'-trailer from precursor tRNA. This chain is Ribonuclease Z, found in Mycobacterium avium (strain 104).